The sequence spans 549 residues: Teichoic acids export ATP-binding protein TagH (549 aa).

Residues 22-243 (DKLKDLFFRS…YDEFLKKYNQ (222 aa)) enclose the ABC transporter domain. Position 57 to 64 (57 to 64 (GLNGSGKS)) interacts with ATP. Positions 244 to 549 (MSVEERKDLR…EIQSISIVKK (306 aa)) are unknown. Positions 346 to 415 (AAKYIVNSNG…ISTKFIEPFK (70 aa)) constitute an SH3b domain.

It belongs to the ABC transporter superfamily. Teichoic acids exporter (TC 3.A.1.104.1) family. In terms of assembly, the complex is composed of two ATP-binding proteins (TagH) and two transmembrane proteins (TagG).

The protein resides in the cell membrane. It carries out the reaction ATP + H2O + teichoic acidSide 1 = ADP + phosphate + teichoic acidSide 2.. Functionally, part of the ABC transporter complex TagGH involved in teichoic acids export. Responsible for energy coupling to the transport system. This chain is Teichoic acids export ATP-binding protein TagH, found in Bacillus anthracis.